Here is a 1252-residue protein sequence, read N- to C-terminus: Calmodulin-regulated spectrin-associated protein 3 (1252 aa).

Disordered stretches follow at residues 183–205, 331–385, 429–457, 479–604, 638–697, 712–935, 962–981, 996–1030, and 1063–1114; these read KTEQ…SPAQ, HAVS…SMSH, SVSS…ESGD, GAAD…MSEL, FLQV…LGDY, QRDM…EAAR, TTRA…GDFT, DLDK…DDSA, and PNNL…TGPR. Phosphothreonine is present on threonine 184. Residue serine 193 is modified to Phosphoserine. The Calponin-homology (CH) domain occupies 203–312; the sequence is PAQPSIRYRK…LVVLLAEMYM (110 aa). Serine 334, serine 347, serine 351, serine 368, serine 373, and serine 382 each carry phosphoserine. Residues 335-353 are compositionally biased toward polar residues; it reads PRNTETVPSQNNSGSSSPV. Residues 359–373 show a composition bias toward low complexity; that stretch reads PLLSPGGPQSPLRGS. Composition is skewed to polar residues over residues 374 to 383, 441 to 450, and 525 to 534; these read TGSLKSSPSM, VSTSSRNSAQ, and ENPSKSSPCS. A phosphoserine mark is found at serine 548, serine 555, and serine 561. Residues 569-580 show a composition bias toward basic and acidic residues; the sequence is AERKKQLVKAEA. Residues 595-629 adopt a coiled-coil conformation; that stretch reads EALSSEMSELGARLEEKRRAIEAQKRRIEAIFAKH. Position 683 is a phosphoserine (serine 683). Residues 696–727 adopt a coiled-coil conformation; it reads DYNRAVSKLSAALSSLQRDMQRLTDQQQRLLA. Residues 729-739 show a composition bias toward pro residues; the sequence is PEAPGPAPPPA. The segment covering 740–768 has biased composition (low complexity); it reads AWVIPGPATGPKAASPSPARRAPAARRSP. Position 767 is a phosphoserine (serine 767). Threonine 797 bears the Phosphothreonine mark. Phosphoserine occurs at positions 812 and 881. Residues 812–825 are compositionally biased toward polar residues; that stretch reads SPSQVPVQTRSSIL. The segment covering 887–934 has biased composition (basic and acidic residues); sequence YKDEDKPEDEMAQKRASLLERQQRRVEEARRRKQWQEAEKEQKREEAA. A coiled-coil region spans residues 896–943; the sequence is EMAQKRASLLERQQRRVEEARRRKQWQEAEKEQKREEAARLAQEAPGL. Serine 1077 is modified (phosphoserine). A CKK domain is found at 1112–1246; the sequence is GPRLYKEPSA…QSKKPTTPKK (135 aa).

The protein belongs to the CAMSAP1 family. Interacts with PLEKHA7. Interacts with CAMSAP2. Interacts with KATNA1 and KATNB1; leading to regulate the length of CAMSAP3-decorated microtubule stretches. Interacts with AKAP9; regulating Golgi assembly in epithelial cells. Interacts with MACF1. Interacts with isoform C of CDH23; leading to inhibit CAMSAP3 ability to induce microtubule bundle formation. Interacts with AKNA. In terms of tissue distribution, expressed at the apical surface of respiratory epithelia, as well as in the acini of submucosal glands (at protein level). In cochlea, restricted to the organ of Corti and increases during development (at protein level). Highly expressed in both sensory hair cells and supporting cells.

It is found in the cytoplasm. It localises to the cytoskeleton. Its subcellular location is the cell junction. The protein resides in the adherens junction. The protein localises to the cilium axoneme. It is found in the cilium basal body. Key microtubule-organizing protein that specifically binds the minus-end of non-centrosomal microtubules and regulates their dynamics and organization. Specifically recognizes growing microtubule minus-ends and autonomously decorates and stabilizes microtubule lattice formed by microtubule minus-end polymerization. Acts on free microtubule minus-ends that are not capped by microtubule-nucleating proteins or other factors and protects microtubule minus-ends from depolymerization. In addition, it also reduces the velocity of microtubule polymerization. Required for the biogenesis and the maintenance of zonula adherens by anchoring the minus-end of microtubules to zonula adherens and by recruiting the kinesin KIFC3 to those junctional sites. Required for orienting the apical-to-basal polarity of microtubules in epithelial cells: acts by tethering non-centrosomal microtubules to the apical cortex, leading to their longitudinal orientation. Plays a key role in early embryos, which lack centrosomes: accumulates at the microtubule bridges that connect pairs of cells and enables the formation of a non-centrosomal microtubule-organizing center that directs intracellular transport in the early embryo. Couples non-centrosomal microtubules with actin: interaction with MACF1 at the minus ends of non-centrosomal microtubules, tethers the microtubules to actin filaments, regulating focal adhesion size and cell migration. Plays a key role in the generation of non-centrosomal microtubules by accumulating in the pericentrosomal region and cooperating with KATNA1 to release non-centrosomal microtubules from the centrosome. Through the microtubule cytoskeleton, also regulates the organization of cellular organelles including the Golgi and the early endosomes. Through interaction with AKAP9, involved in translocation of Golgi vesicles in epithelial cells, where microtubules are mainly non-centrosomal. Plays an important role in motile cilia function by facilitatating proper orientation of basal bodies and formation of central microtubule pairs in motile cilia. This chain is Calmodulin-regulated spectrin-associated protein 3, found in Mus musculus (Mouse).